The following is a 297-amino-acid chain: Alarmin release inhibitor (297 aa).

Residues asparagine 107, asparagine 175, and asparagine 190 are each glycosylated (N-linked (GlcNAc...) asparagine). Residues 151–211 enclose the Sushi domain; that stretch reads TYDPTPNTPT…WVPTLGVCPK (61 aa). Cysteine 183 and cysteine 209 are disulfide-bonded.

As to quaternary structure, interacts with mouse IL33 (in reduced form).

Its subcellular location is the secreted. The protein resides in the host nucleus. Functionally, secreted protein which suppresses the host allergic response by inhibiting the interaction of host IL33 with its receptor in order to maintain parasitic infection. Binds to both host IL33 and host nuclear DNA and this dual binding blocks the interaction of IL33 with its receptor, and tethers IL33 within necrotic cells, preventing its release, and blocking allergic response initiation. The protein is Alarmin release inhibitor of Heligmosomoides polygyrus (Parasitic roundworm).